A 166-amino-acid chain; its full sequence is Large ribosomal subunit protein uL10 (166 aa).

Belongs to the universal ribosomal protein uL10 family. Part of the ribosomal stalk of the 50S ribosomal subunit. The N-terminus interacts with L11 and the large rRNA to form the base of the stalk. The C-terminus forms an elongated spine to which L12 dimers bind in a sequential fashion forming a multimeric L10(L12)X complex.

Forms part of the ribosomal stalk, playing a central role in the interaction of the ribosome with GTP-bound translation factors. The chain is Large ribosomal subunit protein uL10 from Pseudomonas syringae pv. syringae (strain B728a).